Reading from the N-terminus, the 114-residue chain is Protein yippee-like (114 aa).

A Yippee domain is found at 14-111 (RTYSCVHCRA…IELAHMIKEN (98 aa)). The Zn(2+) site is built by cysteine 18, cysteine 21, cysteine 74, and cysteine 77.

It belongs to the yippee family.

Its function is as follows. Involved in regulating synaptic transmission in presynaptic neurons. In class IV dendritic arborization neurons (nociceptors), involved in regulating activation of their second-order neurons (SONs) and maintaining synaptic contact between nociceptors and their SONs. In Drosophila melanogaster (Fruit fly), this protein is Protein yippee-like.